The primary structure comprises 675 residues: Polyphosphate kinase (675 aa).

Asn42 lines the ATP pocket. 2 residues coordinate Mg(2+): Arg372 and Arg401. Catalysis depends on His431, which acts as the Phosphohistidine intermediate. Tyr464, Arg558, and His586 together coordinate ATP.

It belongs to the polyphosphate kinase 1 (PPK1) family. Mg(2+) is required as a cofactor. Post-translationally, an intermediate of this reaction is the autophosphorylated ppk in which a phosphate is covalently linked to a histidine residue through a N-P bond.

The enzyme catalyses [phosphate](n) + ATP = [phosphate](n+1) + ADP. Its function is as follows. Catalyzes the reversible transfer of the terminal phosphate of ATP to form a long-chain polyphosphate (polyP). The sequence is that of Polyphosphate kinase from Helicobacter pylori (strain J99 / ATCC 700824) (Campylobacter pylori J99).